The sequence spans 114 residues: UPF0342 protein LSEI_1724 (114 aa).

It belongs to the UPF0342 family.

The protein is UPF0342 protein LSEI_1724 of Lacticaseibacillus paracasei (strain ATCC 334 / BCRC 17002 / CCUG 31169 / CIP 107868 / KCTC 3260 / NRRL B-441) (Lactobacillus paracasei).